A 69-amino-acid polypeptide reads, in one-letter code: Proteinase inhibitor (69 aa).

Position 1 is an N-acetylserine (Ser1). Cys4 and Cys49 are disulfide-bonded.

Functionally, in vitro, strong inhibitor of bovine beta-trypsin, weak inhibitor of alpha-chymotrypsin, subtilisin BPN', subtilisin Carlsberg and cathepsin G. This chain is Proteinase inhibitor, found in Linum usitatissimum (Flax).